An 83-amino-acid chain; its full sequence is Putative membrane protein insertion efficiency factor (83 aa).

It belongs to the UPF0161 family.

It is found in the cell membrane. In terms of biological role, could be involved in insertion of integral membrane proteins into the membrane. In Streptococcus thermophilus (strain ATCC BAA-250 / LMG 18311), this protein is Putative membrane protein insertion efficiency factor.